The sequence spans 351 residues: Glycerol-1-phosphate dehydrogenase [NAD(P)+] (351 aa).

Residues 97–101 (GKVID) and 119–122 (TSPS) each bind NAD(+). Residue Asp-124 participates in substrate binding. Residue Ser-128 participates in NAD(+) binding. Asp-171 is a substrate binding site. Zn(2+) contacts are provided by Asp-171 and His-251. His-255 is a binding site for substrate. Residue His-267 participates in Zn(2+) binding.

It belongs to the glycerol-1-phosphate dehydrogenase family. In terms of assembly, homodimer. Zn(2+) is required as a cofactor.

The protein localises to the cytoplasm. The catalysed reaction is sn-glycerol 1-phosphate + NAD(+) = dihydroxyacetone phosphate + NADH + H(+). It carries out the reaction sn-glycerol 1-phosphate + NADP(+) = dihydroxyacetone phosphate + NADPH + H(+). Its pathway is membrane lipid metabolism; glycerophospholipid metabolism. Functionally, catalyzes the NAD(P)H-dependent reduction of dihydroxyacetonephosphate (DHAP or glycerone phosphate) to glycerol 1-phosphate (G1P). The G1P thus generated is used as the glycerophosphate backbone of phospholipids in the cellular membranes of Archaea. This chain is Glycerol-1-phosphate dehydrogenase [NAD(P)+], found in Saccharolobus solfataricus (strain ATCC 35092 / DSM 1617 / JCM 11322 / P2) (Sulfolobus solfataricus).